A 148-amino-acid polypeptide reads, in one-letter code: Tetratricopeptide repeat protein 32 (148 aa).

TPR repeat units follow at residues 12-45 (SSAALATAQARFSRGEFAEARELYSAFIGQCARH), 55-88 (ATAYNNRGQTKYFSVDFYEAMDDYTSAIEILPSF), and 89-122 (EVPYYNRGLIRYRLGYFDEALEDFKKALDLNPGF).

This Mus musculus (Mouse) protein is Tetratricopeptide repeat protein 32 (Ttc32).